The sequence spans 478 residues: 3-isopropylmalate dehydratase large subunit (478 aa).

3 residues coordinate [4Fe-4S] cluster: Cys357, Cys418, and Cys421.

Belongs to the aconitase/IPM isomerase family. LeuC type 1 subfamily. In terms of assembly, heterodimer of LeuC and LeuD. [4Fe-4S] cluster serves as cofactor.

The catalysed reaction is (2R,3S)-3-isopropylmalate = (2S)-2-isopropylmalate. The protein operates within amino-acid biosynthesis; L-leucine biosynthesis; L-leucine from 3-methyl-2-oxobutanoate: step 2/4. Functionally, catalyzes the isomerization between 2-isopropylmalate and 3-isopropylmalate, via the formation of 2-isopropylmaleate. The protein is 3-isopropylmalate dehydratase large subunit of Novosphingobium aromaticivorans (strain ATCC 700278 / DSM 12444 / CCUG 56034 / CIP 105152 / NBRC 16084 / F199).